Reading from the N-terminus, the 284-residue chain is Bifunctional protein FolD (284 aa).

Residues 165-167 (GAS), I190, and I231 contribute to the NADP(+) site.

Belongs to the tetrahydrofolate dehydrogenase/cyclohydrolase family. As to quaternary structure, homodimer.

It carries out the reaction (6R)-5,10-methylene-5,6,7,8-tetrahydrofolate + NADP(+) = (6R)-5,10-methenyltetrahydrofolate + NADPH. It catalyses the reaction (6R)-5,10-methenyltetrahydrofolate + H2O = (6R)-10-formyltetrahydrofolate + H(+). It participates in one-carbon metabolism; tetrahydrofolate interconversion. In terms of biological role, catalyzes the oxidation of 5,10-methylenetetrahydrofolate to 5,10-methenyltetrahydrofolate and then the hydrolysis of 5,10-methenyltetrahydrofolate to 10-formyltetrahydrofolate. This is Bifunctional protein FolD from Alkaliphilus metalliredigens (strain QYMF).